The primary structure comprises 2609 residues: Beige protein homolog 1 (2609 aa).

2 disordered regions span residues 1654–1679 (DSKL…APVS) and 1691–1729 (ILPS…KNRT). Over residues 1711 to 1723 (MEDEEDDVDEEDK) the composition is skewed to acidic residues. The region spanning 1735-1870 (ESGDSIQDVY…NRDSLYQKLV (136 aa)) is the BEACH-type PH domain. The BEACH domain maps to 1907 to 2202 (ANALSFSTTH…QVFKKPHPQR (296 aa)). 5 WD repeats span residues 2249–2290 (KDEV…QPVM), 2294–2332 (LHSE…PIKA), 2340–2379 (GHRY…FVSS), 2429–2475 (NSDE…NAKL), and 2507–2546 (ATRQ…SNVH). The FYVE-type zinc finger occupies 2550 to 2604 (DNTSELCSLCDSRFSLMEWRSQCRACGNSNVCSDCVSMLKDTNIKTCYECYRQMP).

It localises to the cytoplasm. It is found in the membrane. May be involved in protein sorting and cell wall formation. The sequence is that of Beige protein homolog 1 (lvs1) from Schizosaccharomyces pombe (strain 972 / ATCC 24843) (Fission yeast).